A 286-amino-acid polypeptide reads, in one-letter code: ATP synthase gamma chain (286 aa).

The protein belongs to the ATPase gamma chain family. In terms of assembly, F-type ATPases have 2 components, CF(1) - the catalytic core - and CF(0) - the membrane proton channel. CF(1) has five subunits: alpha(3), beta(3), gamma(1), delta(1), epsilon(1). CF(0) has three main subunits: a, b and c.

It is found in the cell inner membrane. Its function is as follows. Produces ATP from ADP in the presence of a proton gradient across the membrane. The gamma chain is believed to be important in regulating ATPase activity and the flow of protons through the CF(0) complex. The sequence is that of ATP synthase gamma chain from Shewanella baltica (strain OS223).